The following is a 458-amino-acid chain: Chondroitin hydrolase (458 aa).

The first 22 residues, 1–22 (MVIVWYHQLLLVLLIFIGAAKG), serve as a signal peptide directing secretion. Residues 358–401 (NLDKCRMERCEGRGECYLPRPKTNPAIYNFACRCERPYFGKSCE) form the EGF-like domain. 3 cysteine pairs are disulfide-bonded: C362–C373, C367–C389, and C391–C400.

The protein belongs to the glycosyl hydrolase 56 family.

Endo-beta-galactosaminidase that specifically hydrolyzes chondroitin, releasing GlcUA-beta-(1-&gt;3)-GalNAc-beta-(1-&gt;4)-GlcUA-beta-(1-&gt;3)-GalNAc as the main product. Also hydrolyzes to a lesser extent chondroitin sulfates (CS-A, CS-C) and hyaluronic acid. May regulate the function of chondroitin in cell division. The sequence is that of Chondroitin hydrolase from Caenorhabditis elegans.